Consider the following 648-residue polypeptide: S-M checkpoint control protein rad4 (648 aa).

BRCT domains lie at 2–92 and 96–185; these read GSSK…DDGL and KHFL…YFQL. Positions 242 to 249 match the Nuclear localization signal motif; the sequence is KRGKKRDR. 2 consecutive BRCT domains span residues 298 to 384 and 392 to 486; these read NEAK…EHAL and SLVP…SPWA. Ser-592 is modified (phosphoserine). Residues 643–648 carry the Nuclear localization signal motif; sequence RKLRRR.

As to quaternary structure, interacts with drc1/sld2. Interacts (via BRCT1,2 domains) with crb2; a single rad4 molecule interacts simultaneously with both 'Thr-187' phosphorylation sites in a crb2 dimer.

Its subcellular location is the nucleus. Functionally, essential component for DNA replication and also the checkpoint control system which couples S and M phases. May directly or indirectly interact with chromatin proteins to form the complex required for the initiation and/or progression of DNA synthesis. Interacts simultaneously with both 'Thr-187' phosphorylation sites in a crb2 dimer for establishing the DNA checkpoint. This chain is S-M checkpoint control protein rad4 (rad4), found in Schizosaccharomyces pombe (strain 972 / ATCC 24843) (Fission yeast).